A 139-amino-acid chain; its full sequence is Small ribosomal subunit protein uS11 (139 aa).

A disordered region spans residues 118–139 (EDVTPIPHDGTRPKGGRRGRRV).

It belongs to the universal ribosomal protein uS11 family. In terms of assembly, part of the 30S ribosomal subunit.

Its function is as follows. Located on the platform of the 30S subunit. This chain is Small ribosomal subunit protein uS11, found in Thermococcus sibiricus (strain DSM 12597 / MM 739).